Reading from the N-terminus, the 351-residue chain is Autoinducer 2 import system permease protein LsrC (351 aa).

The next 9 helical transmembrane spans lie at 14 to 34, 39 to 59, 70 to 90, 93 to 113, 115 to 135, 155 to 175, 213 to 233, 252 to 272, and 284 to 304; these read LLAI…YFSL, MIFS…LVML, ITGL…GLAA, LFAL…VTWL, IPAI…MLLL, ILFS…AMAW, MNGV…GFIP, GISL…AFLL, and LPAW…LVFD.

Belongs to the binding-protein-dependent transport system permease family. AraH/RbsC subfamily. The complex is composed of two ATP-binding proteins (LsrA), two transmembrane proteins (LsrC and LsrD) and a solute-binding protein (LsrB).

The protein localises to the cell inner membrane. Its function is as follows. Part of the ABC transporter complex LsrABCD involved in autoinducer 2 (AI-2) import. Probably responsible for the translocation of the substrate across the membrane. This Yersinia pestis bv. Antiqua (strain Antiqua) protein is Autoinducer 2 import system permease protein LsrC (lsrC).